The following is a 1003-amino-acid chain: Pumilio homolog 4 (1003 aa).

The segment at 38 to 65 (QHRNQQSFGRERERDIDVHRSGSAPPTV) is disordered. The segment covering 46 to 57 (GRERERDIDVHR) has biased composition (basic and acidic residues). S225 is subject to Phosphoserine. The segment covering 285-300 (KNSPNTMLGSTMSSPV) has biased composition (polar residues). The tract at residues 285 to 328 (KNSPNTMLGSTMSSPVPRNRTPDSHLVGRSTASGLPPIGTRVGP) is disordered. At T305 the chain carries Phosphothreonine. In terms of domain architecture, PUM-HD spans 644–984 (AEASLLEGFK…HIVARVEKLI (341 aa)). 8 Pumilio repeats span residues 664–699 (EIVG…AIFP), 700–735 (EILP…ELAE), 736–771 (QVTG…RMVK), 772–807 (ELDG…FIIS), 808–843 (SFYG…RIIM), 845–880 (EIMD…EIIN), 881–916 (KLAG…VLVN), and 917–958 (EMLG…LILS).

It localises to the cytoplasm. Sequence-specific RNA-binding protein that regulates translation and mRNA stability by binding the 3'-UTR of target mRNAs. Binds the APUM-binding elements (APBEs) in the 3'-UTR mRNA sequence of CLV1, PNH, WUS and FAS2. In Arabidopsis thaliana (Mouse-ear cress), this protein is Pumilio homolog 4 (APUM4).